Here is a 572-residue protein sequence, read N- to C-terminus: Adenine deaminase (572 aa).

Belongs to the metallo-dependent hydrolases superfamily. Adenine deaminase family. Mn(2+) is required as a cofactor.

The catalysed reaction is adenine + H2O + H(+) = hypoxanthine + NH4(+). The sequence is that of Adenine deaminase from Clostridium perfringens (strain 13 / Type A).